A 242-amino-acid polypeptide reads, in one-letter code: NAD-dependent protein deacetylase (242 aa).

The 242-residue stretch at 1–242 (MQQFEEVHSI…EFVEGLSSRK (242 aa)) folds into the Deacetylase sirtuin-type domain. Alanine 23, threonine 27, phenylalanine 34, arginine 35, glutamine 102, isoleucine 104, aspartate 105, and histidine 120 together coordinate NAD(+). Phenylalanine 34 provides a ligand contact to nicotinamide. The nicotinamide site is built by isoleucine 104 and aspartate 105. The Proton acceptor role is filled by histidine 120. The Zn(2+) site is built by cysteine 128, cysteine 131, cysteine 148, and cysteine 151. NAD(+) is bound by residues threonine 187, serine 188, asparagine 213, and isoleucine 231.

It belongs to the sirtuin family. Class U subfamily. Zn(2+) serves as cofactor.

The protein localises to the cytoplasm. It catalyses the reaction N(6)-acetyl-L-lysyl-[protein] + NAD(+) + H2O = 2''-O-acetyl-ADP-D-ribose + nicotinamide + L-lysyl-[protein]. Functionally, NAD-dependent protein deacetylase which modulates the activities of several enzymes which are inactive in their acetylated form. This is NAD-dependent protein deacetylase from Bacillus cereus (strain ATCC 10987 / NRS 248).